A 42-amino-acid chain; its full sequence is uncharacterized protein (42 aa).

It localises to the cytoplasm. This is an uncharacterized protein from Escherichia coli (strain K12).